Consider the following 508-residue polypeptide: Photosystem II CP47 reaction center protein (508 aa).

The next 6 membrane-spanning stretches (helical) occupy residues 21-36 (SVHI…WAGS), 101-115 (IVFS…IWHW), 140-156 (GIHL…FGAF), 203-218 (IAAG…FHLS), 237-252 (VLSS…AFVV), and 457-472 (SFAL…HGSR).

Belongs to the PsbB/PsbC family. PsbB subfamily. PSII is composed of 1 copy each of membrane proteins PsbA, PsbB, PsbC, PsbD, PsbE, PsbF, PsbH, PsbI, PsbJ, PsbK, PsbL, PsbM, PsbT, PsbX, PsbY, PsbZ, Psb30/Ycf12, at least 3 peripheral proteins of the oxygen-evolving complex and a large number of cofactors. It forms dimeric complexes. Requires Binds multiple chlorophylls. PSII binds additional chlorophylls, carotenoids and specific lipids. as cofactor.

It localises to the plastid. It is found in the chloroplast thylakoid membrane. Functionally, one of the components of the core complex of photosystem II (PSII). It binds chlorophyll and helps catalyze the primary light-induced photochemical processes of PSII. PSII is a light-driven water:plastoquinone oxidoreductase, using light energy to abstract electrons from H(2)O, generating O(2) and a proton gradient subsequently used for ATP formation. This Lobularia maritima (Sweet alyssum) protein is Photosystem II CP47 reaction center protein.